Here is a 538-residue protein sequence, read N- to C-terminus: Putative outer membrane porin BglH (538 aa).

The N-terminal stretch at 1-25 (MFRRNLITSAILLMAPLAFSAQSLA) is a signal peptide. Residues 52–82 (KDEEKKKYTPATVNRSVSTNDQGYAANPFPT) form a disordered region. The segment covering 62-73 (ATVNRSVSTNDQ) has biased composition (polar residues).

The protein belongs to the porin LamB (TC 1.B.3) family.

It is found in the cell outer membrane. Its function is as follows. May be a sugar porin with a broad carbohydrate specificity. This Escherichia coli O139:H28 (strain E24377A / ETEC) protein is Putative outer membrane porin BglH (bglH).